Reading from the N-terminus, the 344-residue chain is tRNA dimethylallyltransferase (344 aa).

Residue 43–50 (GPTCCGKS) participates in ATP binding. A substrate-binding site is contributed by 45-50 (TCCGKS). Positions 68–71 (DSMQ) are interaction with substrate tRNA.

Belongs to the IPP transferase family. Monomer. The cofactor is Mg(2+).

The catalysed reaction is adenosine(37) in tRNA + dimethylallyl diphosphate = N(6)-dimethylallyladenosine(37) in tRNA + diphosphate. Catalyzes the transfer of a dimethylallyl group onto the adenine at position 37 in tRNAs that read codons beginning with uridine, leading to the formation of N6-(dimethylallyl)adenosine (i(6)A). This is tRNA dimethylallyltransferase from Protochlamydia amoebophila (strain UWE25).